Reading from the N-terminus, the 321-residue chain is MNRPERLQPGVKLRDAEKVSRIPVKIVPSERETMLRKPDWLRVKLPASNQRILDIKQALRANGLHSVCEEASCPNLAECFNHGTATFMILGAICTRRCPFCDVAHGRPLKPDEQEPVKLAQTIRDMKLKYVVITSVDRDDLRDGGAQHFADCIREIRKLNPEIKIEILVPDFRGRIDAALDILSTEPPDVFNHNLETAPMHYRKARPGANYQWSLDLLKRFKERHPNVPTKSGLMMGLGETNDEIAQVLRDLREHKVEMLTLGQYLQPSKFHLPVERYVSPAEFDELKALADELGFTHAACGPLVRSSYHADLQAQGKEVK.

7 residues coordinate [4Fe-4S] cluster: Cys68, Cys73, Cys79, Cys94, Cys98, Cys101, and Ser308. Residues 80 to 297 (FNHGTATFMI…KALADELGFT (218 aa)) enclose the Radical SAM core domain.

It belongs to the radical SAM superfamily. Lipoyl synthase family. [4Fe-4S] cluster serves as cofactor.

Its subcellular location is the cytoplasm. The catalysed reaction is [[Fe-S] cluster scaffold protein carrying a second [4Fe-4S](2+) cluster] + N(6)-octanoyl-L-lysyl-[protein] + 2 oxidized [2Fe-2S]-[ferredoxin] + 2 S-adenosyl-L-methionine + 4 H(+) = [[Fe-S] cluster scaffold protein] + N(6)-[(R)-dihydrolipoyl]-L-lysyl-[protein] + 4 Fe(3+) + 2 hydrogen sulfide + 2 5'-deoxyadenosine + 2 L-methionine + 2 reduced [2Fe-2S]-[ferredoxin]. The protein operates within protein modification; protein lipoylation via endogenous pathway; protein N(6)-(lipoyl)lysine from octanoyl-[acyl-carrier-protein]: step 2/2. Catalyzes the radical-mediated insertion of two sulfur atoms into the C-6 and C-8 positions of the octanoyl moiety bound to the lipoyl domains of lipoate-dependent enzymes, thereby converting the octanoylated domains into lipoylated derivatives. This chain is Lipoyl synthase, found in Shewanella oneidensis (strain ATCC 700550 / JCM 31522 / CIP 106686 / LMG 19005 / NCIMB 14063 / MR-1).